The sequence spans 559 residues: 3-phosphoinositide-dependent protein kinase 1 (559 aa).

Residue Tyr-9 is modified to Phosphotyrosine; by SRC and INSR. Ser-25 bears the Phosphoserine mark. The segment at Ser-25 to Glu-83 is disordered. Positions Pro-35 to Gly-44 are enriched in low complexity. The span at Val-45 to Gly-54 shows a compositional bias: polar residues. The Protein kinase domain occupies Phe-85–Phe-345. ATP is bound by residues Ser-95 to Ser-97 and Lys-114. Residues Leu-116–Phe-160 form a PIF-pocket region. Residues Ser-163 to Ala-165 and Glu-169 contribute to the ATP site. Residue Asp-208 is the Proton acceptor of the active site. ATP is bound by residues Glu-212 and Asp-226. The residue at position 244 (Ser-244) is a Phosphoserine. Lys-307 carries the post-translational modification N6-acetyllysine. Thr-357 carries the phosphothreonine; by MELK modification. Tyr-376 and Tyr-379 each carry phosphotyrosine; by SRC and INSR. At Ser-396 the chain carries Phosphoserine. A Phosphoserine; by MAP3K5 modification is found at Ser-397. Ser-399 bears the Phosphoserine mark. The residue at position 401 (Ser-401) is a Phosphoserine; by MAP3K5. The residue at position 413 (Ser-413) is a Phosphoserine. The PH domain maps to Lys-462–Asn-553. Ser-504 carries the post-translational modification Phosphoserine; by PKC/PRKCQ. The residue at position 516 (Thr-516) is a Phosphothreonine; by autocatalysis. Ser-532 carries the post-translational modification Phosphoserine; by PKC/PRKCQ.

It belongs to the protein kinase superfamily. AGC Ser/Thr protein kinase family. PDPK1 subfamily. Homodimer in its autoinhibited state. Active as monomer. Interacts with NPRL2, PAK1, PTK2B, GRB14, STRAP and IKKB. The Tyr-9 phosphorylated form interacts with SRC, RASA1 and CRK (via their SH2 domains). Interacts with SGK3 in a phosphorylation-dependent manner. The tyrosine-phosphorylated form interacts with PTPN6. The Ser-244 phosphorylated form interacts with YWHAH and YWHAQ. Binds INSR in response to insulin. Interacts (via PH domain) with SMAD3, SMAD4 and SMAD7. Interacts with PKN2; the interaction stimulates PDPK1 autophosphorylation, its PI(3,4,5)P3-dependent kinase activity toward 'Ser-473' of AKT1 but also activates its kinase activity toward PRKCD and PRKCZ. Interacts with PKN1 (via C-terminus) and PPARG. Phosphorylation on Ser-244 in the activation loop is required for full activity. PDPK1 itself can autophosphorylate Ser-244, leading to its own activation. Autophosphorylation is inhibited by the apoptotic C-terminus cleavage product of PKN2. Tyr-9 phosphorylation is critical for stabilization of both PDPK1 and the PDPK1/SRC complex via HSP90-mediated protection of PDPK1 degradation. Angiotensin II stimulates the tyrosine phosphorylation of PDPK1 in vascular smooth muscle in a calcium- and SRC-dependent manner. Phosphorylated on Tyr-9, Tyr-376 and Tyr-379 by INSR in response to insulin. Palmitate negatively regulates autophosphorylation at Ser-244 and palmitate-induced phosphorylation at Ser-532 and Ser-504 by PKC/PRKCQ negatively regulates its ability to phosphorylate PKB/AKT1. Phosphorylation at Thr-357 by MELK partially inhibits kinase activity, the inhibition is cooperatively enhanced by phosphorylation at Ser-397 and Ser-401 by MAP3K5. In terms of processing, monoubiquitinated in the kinase domain, deubiquitinated by USP4. As to expression, highly expressed in heart, brain, liver and testis, also expressed in embryonic cells.

Its subcellular location is the cytoplasm. The protein localises to the nucleus. The protein resides in the cell membrane. It localises to the cell junction. It is found in the focal adhesion. The enzyme catalyses L-seryl-[protein] + ATP = O-phospho-L-seryl-[protein] + ADP + H(+). The catalysed reaction is L-threonyl-[protein] + ATP = O-phospho-L-threonyl-[protein] + ADP + H(+). Its activity is regulated as follows. Homodimerization regulates its activity by maintaining the kinase in an autoinhibitory conformation. NPRL2 down-regulates its activity by interfering with tyrosine phosphorylation at the Tyr-9, Tyr-376 and Tyr-379 residues. The 14-3-3 protein YWHAQ acts as a negative regulator by association with the residues surrounding the Ser-244 residue. STRAP positively regulates its activity by enhancing its autophosphorylation and by stimulating its dissociation from YWHAQ. SMAD2, SMAD3, SMAD4 and SMAD7 also positively regulate its activity by stimulating its dissociation from YWHAQ. Activated by phosphorylation on Tyr-9, Tyr-376 and Tyr-379 by INSR in response to insulin. In terms of biological role, serine/threonine kinase which acts as a master kinase, phosphorylating and activating a subgroup of the AGC family of protein kinases. Its targets include: protein kinase B (PKB/AKT1, PKB/AKT2, PKB/AKT3), p70 ribosomal protein S6 kinase (RPS6KB1), p90 ribosomal protein S6 kinase (RPS6KA1, RPS6KA2 and RPS6KA3), cyclic AMP-dependent protein kinase (PRKACA), protein kinase C (PRKCD and PRKCZ), serum and glucocorticoid-inducible kinase (SGK1, SGK2 and SGK3), p21-activated kinase-1 (PAK1), TSSK3, protein kinase PKN (PKN1 and PKN2). Plays a central role in the transduction of signals from insulin by providing the activating phosphorylation to PKB/AKT1, thus propagating the signal to downstream targets controlling cell proliferation and survival, as well as glucose and amino acid uptake and storage. Negatively regulates the TGF-beta-induced signaling by: modulating the association of SMAD3 and SMAD7 with TGF-beta receptor, phosphorylating SMAD2, SMAD3, SMAD4 and SMAD7, preventing the nuclear translocation of SMAD3 and SMAD4 and the translocation of SMAD7 from the nucleus to the cytoplasm in response to TGF-beta. Activates PPARG transcriptional activity and promotes adipocyte differentiation. Activates the NF-kappa-B pathway via phosphorylation of IKKB. The tyrosine phosphorylated form is crucial for the regulation of focal adhesions by angiotensin II. Controls proliferation, survival, and growth of developing pancreatic cells. Participates in the regulation of Ca(2+) entry and Ca(2+)-activated K(+) channels of mast cells. Essential for the motility of vascular endothelial cells (ECs) and is involved in the regulation of their chemotaxis. Plays a critical role in cardiac homeostasis by serving as a dual effector for cell survival and beta-adrenergic response. Plays an important role during thymocyte development by regulating the expression of key nutrient receptors on the surface of pre-T cells and mediating Notch-induced cell growth and proliferative responses. Provides negative feedback inhibition to toll-like receptor-mediated NF-kappa-B activation in macrophages. This is 3-phosphoinositide-dependent protein kinase 1 (Pdpk1) from Mus musculus (Mouse).